We begin with the raw amino-acid sequence, 460 residues long: V-type ATP synthase beta chain (460 aa).

It belongs to the ATPase alpha/beta chains family.

In terms of biological role, produces ATP from ADP in the presence of a proton gradient across the membrane. The V-type beta chain is a regulatory subunit. The sequence is that of V-type ATP synthase beta chain from Acetivibrio thermocellus (strain ATCC 27405 / DSM 1237 / JCM 9322 / NBRC 103400 / NCIMB 10682 / NRRL B-4536 / VPI 7372) (Clostridium thermocellum).